Here is a 235-residue protein sequence, read N- to C-terminus: Chalcone--flavanone isomerase 2 (235 aa).

Residues threonine 50 and serine 192 each coordinate substrate.

Belongs to the chalcone isomerase family.

The catalysed reaction is a chalcone = a flavanone.. The protein operates within secondary metabolite biosynthesis; flavonoid biosynthesis. In terms of biological role, catalyzes the intramolecular cyclization of bicyclic chalcones into tricyclic (S)-flavanones. Responsible for the isomerization of 4,2',4',6'-tetrahydroxychalcone (also termed chalcone) into naringenin. In Chrysanthemum morifolium (Florist's daisy), this protein is Chalcone--flavanone isomerase 2 (CHI2).